We begin with the raw amino-acid sequence, 195 residues long: dITP/XTP pyrophosphatase (195 aa).

A substrate-binding site is contributed by 8–13 (SNNQGK). Glu-39 and Asp-68 together coordinate Mg(2+). The Proton acceptor role is filled by Asp-68. Residues Ser-69, 149 to 152 (FGYD), Lys-172, and 177 to 178 (HR) each bind substrate.

This sequence belongs to the HAM1 NTPase family. Homodimer. It depends on Mg(2+) as a cofactor.

It carries out the reaction XTP + H2O = XMP + diphosphate + H(+). It catalyses the reaction dITP + H2O = dIMP + diphosphate + H(+). The catalysed reaction is ITP + H2O = IMP + diphosphate + H(+). Its function is as follows. Pyrophosphatase that catalyzes the hydrolysis of nucleoside triphosphates to their monophosphate derivatives, with a high preference for the non-canonical purine nucleotides XTP (xanthosine triphosphate), dITP (deoxyinosine triphosphate) and ITP. Seems to function as a house-cleaning enzyme that removes non-canonical purine nucleotides from the nucleotide pool, thus preventing their incorporation into DNA/RNA and avoiding chromosomal lesions. This chain is dITP/XTP pyrophosphatase, found in Staphylococcus aureus (strain COL).